Here is a 76-residue protein sequence, read N- to C-terminus: MKVLSLIFVIFSVLVLFASAKDPVCDQPKAVGRCFAAFPKFYYNSSSGQCQAFIYGGCGGNENNFNTLEECNAKCA.

The first 20 residues, 1 to 20 (MKVLSLIFVIFSVLVLFASA), serve as a signal peptide directing secretion. The region spanning 25–75 (CDQPKAVGRCFAAFPKFYYNSSSGQCQAFIYGGCGGNENNFNTLEECNAKC) is the BPTI/Kunitz inhibitor domain. 3 cysteine pairs are disulfide-bonded: cysteine 25/cysteine 75, cysteine 34/cysteine 58, and cysteine 50/cysteine 71.

As to expression, expressed in salivary glands.

Its subcellular location is the secreted. Its function is as follows. Potent anticoagulant protein that inhibits the hydrolytic activities of all serine proteases tested (trypsin, thrombin, elastase, and chymotrypsin), with the highest efficacy on thrombin. The chain is Tabkunin 2 from Tabanus yao (Horsefly).